The chain runs to 394 residues: Elongation factor Tu (394 aa).

The 195-residue stretch at 10 to 204 (KPHINVGTIG…YLDTYIPEPK (195 aa)) folds into the tr-type G domain. The G1 stretch occupies residues 19–26 (GHVDHGKT). 19–26 (GHVDHGKT) is a GTP binding site. A Mg(2+)-binding site is contributed by Thr26. Residues 60–64 (GITIN) form a G2 region. The G3 stretch occupies residues 81–84 (DCPG). Residues 81-85 (DCPGH) and 136-139 (NKCD) contribute to the GTP site. The tract at residues 136–139 (NKCD) is G4. Positions 174-176 (SAL) are G5.

This sequence belongs to the TRAFAC class translation factor GTPase superfamily. Classic translation factor GTPase family. EF-Tu/EF-1A subfamily. Monomer.

Its subcellular location is the cytoplasm. The catalysed reaction is GTP + H2O = GDP + phosphate + H(+). Its function is as follows. GTP hydrolase that promotes the GTP-dependent binding of aminoacyl-tRNA to the A-site of ribosomes during protein biosynthesis. The polypeptide is Elongation factor Tu (Buchnera aphidicola subsp. Baizongia pistaciae (strain Bp)).